Consider the following 94-residue polypeptide: Phormicin (94 aa).

Residues 1-23 (MKFFMVFVVTFCLAVCFVSQSLA) form the signal peptide. The propeptide occupies 24–54 (IPADAANDAHFVDGVQALKEIEPELHGRYKR). Intrachain disulfides connect C57–C84, C70–C90, and C74–C92.

Belongs to the invertebrate defensin family. Type 1 subfamily.

Its subcellular location is the secreted. Responsible for the anti Gram-positive activity of immune hemolymph of P.terraenovae. This chain is Phormicin, found in Protophormia terraenovae (Northern blowfly).